Reading from the N-terminus, the 282-residue chain is Pantothenate synthetase (282 aa).

30–37 provides a ligand contact to ATP; the sequence is MGYFHEGH. The active-site Proton donor is the H37. Q61 contacts (R)-pantoate. Q61 provides a ligand contact to beta-alanine. 147-150 serves as a coordination point for ATP; it reads GQKD. Q153 serves as a coordination point for (R)-pantoate. ATP is bound by residues V176 and 184 to 187; that span reads LSSR.

Belongs to the pantothenate synthetase family. Homodimer.

Its subcellular location is the cytoplasm. The enzyme catalyses (R)-pantoate + beta-alanine + ATP = (R)-pantothenate + AMP + diphosphate + H(+). It functions in the pathway cofactor biosynthesis; (R)-pantothenate biosynthesis; (R)-pantothenate from (R)-pantoate and beta-alanine: step 1/1. Functionally, catalyzes the condensation of pantoate with beta-alanine in an ATP-dependent reaction via a pantoyl-adenylate intermediate. The protein is Pantothenate synthetase of Maridesulfovibrio salexigens (strain ATCC 14822 / DSM 2638 / NCIMB 8403 / VKM B-1763) (Desulfovibrio salexigens).